The chain runs to 396 residues: Elongation factor Tu 1 (396 aa).

The region spanning 10–206 (KPHVNVGTIG…ALDTYIPTPE (197 aa)) is the tr-type G domain. Residues 19–26 (GHVDHGKT) form a G1 region. A GTP-binding site is contributed by 19–26 (GHVDHGKT). Thr26 lines the Mg(2+) pocket. Positions 60–64 (GITIN) are G2. Positions 81 to 84 (DCPG) are G3. Residues 81-85 (DCPGH) and 136-139 (NKCD) contribute to the GTP site. The segment at 136-139 (NKCD) is G4. The interval 174-176 (SAK) is G5.

This sequence belongs to the TRAFAC class translation factor GTPase superfamily. Classic translation factor GTPase family. EF-Tu/EF-1A subfamily. As to quaternary structure, monomer.

It is found in the cytoplasm. It catalyses the reaction GTP + H2O = GDP + phosphate + H(+). In terms of biological role, GTP hydrolase that promotes the GTP-dependent binding of aminoacyl-tRNA to the A-site of ribosomes during protein biosynthesis. The protein is Elongation factor Tu 1 of Acidovorax sp. (strain JS42).